Reading from the N-terminus, the 487-residue chain is MTTEQKLQLAEIRTMIPEMRRVECIHFVGIGGAGMSGIAEVLLNEGYHISGSDVAENSVTVRLAEKGADIFFGHHASNVEKASVVVVSTAIDQANPEIVAAKENRIPVIRRAEMLAELMRYRHGIAVAGTHGKTTTTALTTQIYSEAGLDPTFVNGGLVKNAGTNARLGSSRFLIAEADESDASFLHLQPMVSIVTNIEADHMDTYGGDFEVLKQTFIDFLHNLPFYGQAVMCIDDDVVRELLPRVSRQVITYGFSDDADVRLINYRQEGQKSFFTVQRKDRTDLDIVLNIPGKHNALNATAAIAVATEEDVEDSAILSALLNFEGAGRRFDQLGEFETGNGHAMLVDDYGHHPTEVDVTIKAARAGWEDKRLVMIFQPHRYSRTRDLYDDFANVLDNVDVLIMLDVYSAGEKPIAGADGRALCRTIRARGKLDPIFVPTIDALPSVLANIIQNNDLVLTQGAGDVGKLAKQLASLELNIQAMKELG.

129–135 (GTHGKTT) is a binding site for ATP.

It belongs to the MurCDEF family.

The protein resides in the cytoplasm. It catalyses the reaction UDP-N-acetyl-alpha-D-muramate + L-alanine + ATP = UDP-N-acetyl-alpha-D-muramoyl-L-alanine + ADP + phosphate + H(+). Its pathway is cell wall biogenesis; peptidoglycan biosynthesis. Functionally, cell wall formation. The polypeptide is UDP-N-acetylmuramate--L-alanine ligase (Aliivibrio salmonicida (strain LFI1238) (Vibrio salmonicida (strain LFI1238))).